The following is a 464-amino-acid chain: GDNF family receptor alpha-2 (464 aa).

Positions 1-21 (MILANAFCLFFFLDETLRSLA) are cleaved as a signal peptide. 14 disulfides stabilise this stretch: Cys-40–Cys-93, Cys-47–Cys-53, Cys-63–Cys-78, Cys-95–Cys-105, Cys-161–Cys-222, Cys-168–Cys-174, Cys-185–Cys-200, Cys-195–Cys-241, Cys-224–Cys-229, Cys-251–Cys-323, Cys-258–Cys-264, Cys-275–Cys-293, Cys-285–Cys-347, and Cys-325–Cys-335. N-linked (GlcNAc...) asparagine glycosylation is present at Asn-52. Asn-357 carries an N-linked (GlcNAc...) asparagine glycan. Positions 360 to 374 (DVNLSPKSPPFQATQ) are enriched in polar residues. Residues 360 to 392 (DVNLSPKSPPFQATQAPRVDKTPSLPDDLSDST) form a disordered region. Over residues 381–392 (TPSLPDDLSDST) the composition is skewed to low complexity. The N-linked (GlcNAc...) asparagine glycan is linked to Asn-413. The GPI-anchor amidated asparagine moiety is linked to residue Asn-440. Positions 441–464 (SGPRRTRPSAALTAASFLMLKLAL) are cleaved as a propeptide — removed in mature form.

This sequence belongs to the GDNFR family. Interacts with NRTN ligand and RET: forms a 2:2:2 ternary complex composed of NRTN ligand, GFRA2 and RET receptor. Also forms a 4:4:4 tetrameric complex composed of 4 copies of NRTN ligand, GFRA2 and RET receptor, which prevents endocytosis of RET. Interacts with SORL1.

It is found in the cell membrane. In terms of biological role, receptor for neurturin (NRTN), a growth factor that supports the survival of sympathetic neurons. NRTN-binding leads to autophosphorylation and activation of the RET receptor. Also able to mediate GDNF signaling through the RET tyrosine kinase receptor. The protein is GDNF family receptor alpha-2 (GFRA2) of Bos taurus (Bovine).